The chain runs to 527 residues: Transcription factor bHLH157 (527 aa).

2 disordered regions span residues 295-318 and 335-368; these read SGVN…LFPQ and SSIG…KDRQ. Residues 307-318 show a composition bias toward polar residues; that stretch reads TSSAHSSSLFPQ. The short motif at 341-348 is the Nuclear localization signal element; it reads WKKPHEEG. Positions 343 to 368 are enriched in basic and acidic residues; that stretch reads KPHEEGVKKKRAKAGESRRPRPKDRQ. The 50-residue stretch at 354–403 folds into the bHLH domain; sequence AKAGESRRPRPKDRQMIQDRIKELRGMIPNGAKCSIDTLLDLTIKHMVFM.

This sequence belongs to the bHLH protein family. LHW subfamily. Homodimer.

The protein resides in the nucleus. Functionally, transcription factor that may regulate root development. The protein is Transcription factor bHLH157 (BHLH157) of Arabidopsis thaliana (Mouse-ear cress).